Consider the following 296-residue polypeptide: Lipoyl synthase (296 aa).

[4Fe-4S] cluster-binding residues include Cys37, Cys42, Cys48, Cys63, Cys67, Cys70, and Ser276. The Radical SAM core domain occupies 49-265 (WSKKHTTVMI…ERVAKTKGFL (217 aa)).

This sequence belongs to the radical SAM superfamily. Lipoyl synthase family. [4Fe-4S] cluster is required as a cofactor.

It is found in the cytoplasm. It catalyses the reaction [[Fe-S] cluster scaffold protein carrying a second [4Fe-4S](2+) cluster] + N(6)-octanoyl-L-lysyl-[protein] + 2 oxidized [2Fe-2S]-[ferredoxin] + 2 S-adenosyl-L-methionine + 4 H(+) = [[Fe-S] cluster scaffold protein] + N(6)-[(R)-dihydrolipoyl]-L-lysyl-[protein] + 4 Fe(3+) + 2 hydrogen sulfide + 2 5'-deoxyadenosine + 2 L-methionine + 2 reduced [2Fe-2S]-[ferredoxin]. It participates in protein modification; protein lipoylation via endogenous pathway; protein N(6)-(lipoyl)lysine from octanoyl-[acyl-carrier-protein]: step 2/2. Catalyzes the radical-mediated insertion of two sulfur atoms into the C-6 and C-8 positions of the octanoyl moiety bound to the lipoyl domains of lipoate-dependent enzymes, thereby converting the octanoylated domains into lipoylated derivatives. In Rickettsia conorii (strain ATCC VR-613 / Malish 7), this protein is Lipoyl synthase.